The primary structure comprises 356 residues: Protein RecA (356 aa).

Residue 68–75 (GQESSGKT) coordinates ATP.

It belongs to the RecA family.

The protein localises to the cytoplasm. Functionally, can catalyze the hydrolysis of ATP in the presence of single-stranded DNA, the ATP-dependent uptake of single-stranded DNA by duplex DNA, and the ATP-dependent hybridization of homologous single-stranded DNAs. It interacts with LexA causing its activation and leading to its autocatalytic cleavage. This Thermotoga petrophila (strain ATCC BAA-488 / DSM 13995 / JCM 10881 / RKU-1) protein is Protein RecA.